We begin with the raw amino-acid sequence, 76 residues long: Large ribosomal subunit protein uL29 (76 aa).

Belongs to the universal ribosomal protein uL29 family.

The sequence is that of Large ribosomal subunit protein uL29 from Corynebacterium diphtheriae (strain ATCC 700971 / NCTC 13129 / Biotype gravis).